Here is a 68-residue protein sequence, read N- to C-terminus: Large ribosomal subunit protein bL35 (68 aa).

It belongs to the bacterial ribosomal protein bL35 family.

The protein is Large ribosomal subunit protein bL35 of Orientia tsutsugamushi (strain Ikeda) (Rickettsia tsutsugamushi).